The chain runs to 417 residues: UDP-N-acetylglucosamine 1-carboxyvinyltransferase (417 aa).

Residue 22–23 (KN) coordinates phosphoenolpyruvate. Position 94 (R94) interacts with UDP-N-acetyl-alpha-D-glucosamine. C118 acts as the Proton donor in catalysis. C118 carries the post-translational modification 2-(S-cysteinyl)pyruvic acid O-phosphothioketal. UDP-N-acetyl-alpha-D-glucosamine is bound by residues 123–127 (RPIDQ), D306, and I328.

The protein belongs to the EPSP synthase family. MurA subfamily.

It localises to the cytoplasm. It catalyses the reaction phosphoenolpyruvate + UDP-N-acetyl-alpha-D-glucosamine = UDP-N-acetyl-3-O-(1-carboxyvinyl)-alpha-D-glucosamine + phosphate. It functions in the pathway cell wall biogenesis; peptidoglycan biosynthesis. Its function is as follows. Cell wall formation. Adds enolpyruvyl to UDP-N-acetylglucosamine. This Clostridium botulinum (strain ATCC 19397 / Type A) protein is UDP-N-acetylglucosamine 1-carboxyvinyltransferase.